The following is a 2289-amino-acid chain: Protein Ycf2 (2289 aa).

1643–1650 is a binding site for ATP; that stretch reads GSIGTGRS.

This sequence belongs to the Ycf2 family.

It is found in the plastid. The protein resides in the chloroplast stroma. In terms of biological role, probable ATPase of unknown function. Its presence in a non-photosynthetic plant (Epifagus virginiana) and experiments in tobacco indicate that it has an essential function which is probably not related to photosynthesis. This Capsella bursa-pastoris (Shepherd's purse) protein is Protein Ycf2.